The sequence spans 359 residues: MRKIIHIDMDCYFAAVEMRDFPEYRGKPLAVGGSRVQRGVISTCNYEARKFGVRSAMATGYALKLCPDLILVPGRMQVYKEVSQQIRAIFCRYTELIEPLSLDEAYLDVSDCKLFKGSATLIAEAIRRDILAETGLTASAGVAPIKFLAKVASDLNKPNGQCVIPPDEVAEFVKSLSLRKIPGVGKVTAEKLSSLGLNTCADVQAYPKQELIARFGKFGTVLVERAHGIDERGISVSRERKSVGVETTLAQDIYTLEQCQQVMPGLIQELSSRLGRSAKGRQIHKQVVKLKFNDFKQTTIEHRSDEVSVVMFYELLSQAMARQEGRGIRLLGVSVGLAESKDTLSPLMVRETKQLDFVF.

One can recognise a UmuC domain in the interval 4-185; that stretch reads IIHIDMDCYF…LSLRKIPGVG (182 aa). The Mg(2+) site is built by Asp-8 and Asp-103. Glu-104 is a catalytic residue.

It belongs to the DNA polymerase type-Y family. Monomer. Requires Mg(2+) as cofactor.

The protein resides in the cytoplasm. The catalysed reaction is DNA(n) + a 2'-deoxyribonucleoside 5'-triphosphate = DNA(n+1) + diphosphate. Its function is as follows. Poorly processive, error-prone DNA polymerase involved in untargeted mutagenesis. Copies undamaged DNA at stalled replication forks, which arise in vivo from mismatched or misaligned primer ends. These misaligned primers can be extended by PolIV. Exhibits no 3'-5' exonuclease (proofreading) activity. May be involved in translesional synthesis, in conjunction with the beta clamp from PolIII. This is DNA polymerase IV from Shewanella sp. (strain ANA-3).